The primary structure comprises 184 residues: Protein PLANT CADMIUM RESISTANCE 4 (184 aa).

The span at 1–10 (MGRPGSQPNE) shows a compositional bias: polar residues. The disordered stretch occupies residues 1–21 (MGRPGSQPNEAQPPPVQVQPT). A helical membrane pass occupies residues 96–116 (GGLLYGMIFFIGVPFVYSCMF).

It belongs to the cornifelin family.

It localises to the membrane. Its function is as follows. May be involved in heavy metals transport. The chain is Protein PLANT CADMIUM RESISTANCE 4 (PCR4) from Arabidopsis thaliana (Mouse-ear cress).